Consider the following 279-residue polypeptide: Probable endonuclease 4 (279 aa).

Zn(2+) contacts are provided by histidine 74, histidine 112, glutamate 147, aspartate 180, histidine 183, histidine 214, aspartate 227, histidine 229, and glutamate 259.

The protein belongs to the AP endonuclease 2 family. The cofactor is Zn(2+).

The enzyme catalyses Endonucleolytic cleavage to 5'-phosphooligonucleotide end-products.. In terms of biological role, endonuclease IV plays a role in DNA repair. It cleaves phosphodiester bonds at apurinic or apyrimidinic (AP) sites, generating a 3'-hydroxyl group and a 5'-terminal sugar phosphate. This chain is Probable endonuclease 4, found in Mycoplasma mobile (strain ATCC 43663 / 163K / NCTC 11711) (Mesomycoplasma mobile).